Reading from the N-terminus, the 173-residue chain is Alpha-crystallin A chain (173 aa).

An N-acetylmethionine modification is found at methionine 1. The segment at 1–63 is required for complex formation with BFSP1 and BFSP2; it reads MDIAIQQPWF…RTVLDSGVSE (63 aa). Glutamine 6 is modified (deamidated glutamine; partial). Serine 45 is subject to Phosphoserine. Glutamine 50 carries the deamidated glutamine; partial modification. Positions 52–162 constitute a sHSP domain; that stretch reads LFRTVLDSGV…GHSERAIPVS (111 aa). Residues lysine 70 and lysine 99 each carry the N6-acetyllysine modification. Histidine 100 is a Zn(2+) binding site. A Deamidated asparagine; partial modification is found at asparagine 101. Residues glutamate 102 and histidine 107 each contribute to the Zn(2+) site. Serine 122 carries the phosphoserine modification. Asparagine 123 bears the Deamidated asparagine; partial mark. The tract at residues 144-173 is disordered; the sequence is PKVPSGVDAGHSERAIPVSREEKPSSAPSS. Residues 153-167 are compositionally biased toward basic and acidic residues; it reads GHSERAIPVSREEKP. Position 154 (histidine 154) interacts with Zn(2+). O-linked (GlcNAc) serine glycosylation occurs at serine 162.

This sequence belongs to the small heat shock protein (HSP20) family. As to quaternary structure, heteromer composed of three CRYAA and one CRYAB subunits. Inter-subunit bridging via zinc ions enhances stability, which is crucial as there is no protein turn over in the lens. Can also form homodimers and homotetramers (dimers of dimers) which serve as the building blocks of homooligomers. Within homooligomers, the zinc-binding motif is created from residues of 3 different molecules. His-100 and Glu-102 from one molecule are ligands of the zinc ion, and His-107 and His-154 residues from additional molecules complete the site with tetrahedral coordination geometry. Part of a complex required for lens intermediate filament formation composed of BFSP1, BFSP2 and CRYAA. In terms of processing, acetylation at Lys-70 may increase chaperone activity. Undergoes age-dependent proteolytical cleavage at the C-terminus.

It is found in the cytoplasm. It localises to the nucleus. Functionally, contributes to the transparency and refractive index of the lens. Acts as a chaperone, preventing aggregation of various proteins under a wide range of stress conditions. Required for the correct formation of lens intermediate filaments as part of a complex composed of BFSP1, BFSP2 and CRYAA. The polypeptide is Alpha-crystallin A chain (CRYAA) (Neovison vison (American mink)).